Consider the following 242-residue polypeptide: Lysosomal membrane ascorbate-dependent ferrireductase CYB561A3 (242 aa).

Residues 1–4 (MASG) lie on the Cytoplasmic side of the membrane. A helical membrane pass occupies residues 5 to 25 (WFYLSCMVLGSLGSMCILFTA). The Cytochrome b561 domain maps to 12-219 (VLGSLGSMCI…FGLLVLYVLL (208 aa)). Over 26–40 (YWMQYWRGGFAWDGT) the chain is Lumenal. The helical transmembrane segment at 41–61 (VLMFNWHPVLMVAGMVVLYGA) threads the bilayer. Heme b is bound by residues His47 and Arg67. Over 62–81 (ASLVYRLPSSWVGPRLPWKV) the chain is Cytoplasmic. 2 residues coordinate L-ascorbate: Arg76 and Lys80. Residues 82-102 (LHAALHLLAFTCTVVGLIAVF) traverse the membrane as a helical segment. Heme b-binding positions include His83, 112–115 (HLYS), and His117. Topologically, residues 103–119 (RFHNHSRIAHLYSLHSW) are lumenal. The chain crosses the membrane as a helical span at residues 120-140 (LGITTVVLFACQWFLGFAVFL). Topologically, residues 141-154 (LPWASQWLRSLLKP) are cytoplasmic. Arg149 is a binding site for L-ascorbate. Residues 155–175 (LHVFFGACILSLSITSVISGI) traverse the membrane as a helical segment. The heme b site is built by His156 and Glu177. Topologically, residues 176–202 (NEKLFFVLKNATKPYSSLPGEAVFANS) are lumenal. A helical membrane pass occupies residues 203-223 (TGLLVVAFGLLVLYVLLASSW). Lys224 lines the heme b pocket. Residues 224–242 (KRPDPGALTDRQPLLHDRE) lie on the Cytoplasmic side of the membrane.

Homodimer. Requires heme b as cofactor. Post-translationally, N-glycosylated. As to expression, present in lung, spleen, thymus and testis. Present at low level in brain, heart, liver and kidney. Expressed in the alveolar macrophages of the lung, in the white pulp of the spleen, widespread in the thymus, and in the Sertoli cells of the testis (at protein level).

It localises to the late endosome membrane. It is found in the lysosome membrane. The catalysed reaction is Fe(3+)(out) + L-ascorbate(in) = monodehydro-L-ascorbate radical(in) + Fe(2+)(out) + H(+). Functionally, transmembrane reductase that uses ascorbate as an electron donor in the cytoplasm and transfers electrons across membranes to reduce iron cations Fe(3+) into Fe(2+) in the lumen of the late endosome and lysosome. Reduced iron can then be extruded from the late endosome and lysosome to the cytoplasm by divalent metal-specific transporters. It is therefore most probably involved in endosomal and lysosomal cellular iron homeostasis. This is Lysosomal membrane ascorbate-dependent ferrireductase CYB561A3 from Mus musculus (Mouse).